The primary structure comprises 288 residues: Energy-coupling factor transporter ATP-binding protein EcfA2 (288 aa).

One can recognise an ABC transporter domain in the interval 2–244 (IKFEKVNYTY…VDFLKAHELG (243 aa)). Residue 39–46 (GHTGSGKS) coordinates ATP. Glutamate 170 serves as the catalytic Proton acceptor.

Belongs to the ABC transporter superfamily. Energy-coupling factor EcfA family. In terms of assembly, forms a stable energy-coupling factor (ECF) transporter complex composed of 2 membrane-embedded substrate-binding proteins (S component), 2 ATP-binding proteins (A component) and 2 transmembrane proteins (T component). In L.lactis forms a stable complex with EcfA' and EcfT and substrate-binding components. In E.coli forms a stable complex with EcfA, EcfT and individually with 3 tested substrate-binding components (BioY, NiaX and ThiT) with a stoichiometry of 1.1:1:1. The core ECF complex interacts with a number of substrate-specific binding components, including BioY, BioY2, HmpT, NiaX, PanT, QueT, RibU and ThiT.

It is found in the cell membrane. Functionally, ATP-binding (A) component of a common energy-coupling factor (ECF) ABC-transporter complex. Unlike classic ABC transporters this ECF transporter provides the energy necessary to transport a number of different substrates. In this organism these probably include biotin, thiamine precursor, niacin, pantothenic acid, queuosine precursor, riboflavin and thiamine. Uptake of niacin or riboflavin into proteosomes containing EcfA1A2T and Niax or RibU has been demonstrated. Uptake requires hydrolyzable Mg-ATP and is substrate-specific; NiaX-containing proteosomes did not transport riboflavin. The polypeptide is Energy-coupling factor transporter ATP-binding protein EcfA2 (Lactococcus lactis subsp. cremoris (strain MG1363)).